The chain runs to 405 residues: Cellobiose 2-epimerase (405 aa).

It belongs to the cellobiose 2-epimerase family.

The enzyme catalyses D-cellobiose = beta-D-glucosyl-(1-&gt;4)-D-mannopyranose. Catalyzes the reversible epimerization of cellobiose to 4-O-beta-D-glucopyranosyl-D-mannose (Glc-Man). Can also epimerize lactose to epilactose. The sequence is that of Cellobiose 2-epimerase (ce13) from Eubacterium cellulosolvens.